The primary structure comprises 676 residues: DNA ligase (676 aa).

NAD(+)-binding positions include 42-46, 91-92, and Glu-121; these read DDVYD and SL. The active-site N6-AMP-lysine intermediate is Lys-123. NAD(+) contacts are provided by Arg-144, Glu-178, Lys-294, and Lys-318. Residues Cys-412, Cys-415, Cys-430, and Cys-435 each contribute to the Zn(2+) site. Positions 596-676 constitute a BRCT domain; that stretch reads NSTSEFTGKR…QLQAAMDETK (81 aa).

Belongs to the NAD-dependent DNA ligase family. LigA subfamily. Requires Mg(2+) as cofactor. The cofactor is Mn(2+).

The catalysed reaction is NAD(+) + (deoxyribonucleotide)n-3'-hydroxyl + 5'-phospho-(deoxyribonucleotide)m = (deoxyribonucleotide)n+m + AMP + beta-nicotinamide D-nucleotide.. DNA ligase that catalyzes the formation of phosphodiester linkages between 5'-phosphoryl and 3'-hydroxyl groups in double-stranded DNA using NAD as a coenzyme and as the energy source for the reaction. It is essential for DNA replication and repair of damaged DNA. This is DNA ligase from Levilactobacillus brevis (strain ATCC 367 / BCRC 12310 / CIP 105137 / JCM 1170 / LMG 11437 / NCIMB 947 / NCTC 947) (Lactobacillus brevis).